A 106-amino-acid chain; its full sequence is U1-lycotoxin-Ls1z (106 aa).

Residues 1–19 (MKVLVVVALLVTLISYSSS) form the signal peptide. A propeptide spanning residues 20-40 (EGIDDLEADELLSLMANEQTR) is cleaved from the precursor. Disulfide bonds link C43–C58, C50–C67, C57–C85, and C69–C83.

The protein belongs to the neurotoxin 19 (CSTX) family. 03 subfamily. As to expression, expressed by the venom gland.

It is found in the secreted. This chain is U1-lycotoxin-Ls1z, found in Lycosa singoriensis (Wolf spider).